Reading from the N-terminus, the 308-residue chain is uncharacterized protein (308 aa).

The S4 RNA-binding domain maps to 11–87 (KRLDSLLASL…LKLEVLFEDK (77 aa)). Asp-131 is an active-site residue.

It belongs to the pseudouridine synthase RluA family.

The catalysed reaction is a uridine in RNA = a pseudouridine in RNA. This is an uncharacterized protein from Mycoplasma genitalium (strain ATCC 33530 / DSM 19775 / NCTC 10195 / G37) (Mycoplasmoides genitalium).